Here is a 385-residue protein sequence, read N- to C-terminus: 4-hydroxy-3-methylbut-2-en-1-yl diphosphate synthase (flavodoxin) (385 aa).

Cysteine 280, cysteine 283, cysteine 315, and glutamate 322 together coordinate [4Fe-4S] cluster.

The protein belongs to the IspG family. The cofactor is [4Fe-4S] cluster.

It catalyses the reaction (2E)-4-hydroxy-3-methylbut-2-enyl diphosphate + oxidized [flavodoxin] + H2O + 2 H(+) = 2-C-methyl-D-erythritol 2,4-cyclic diphosphate + reduced [flavodoxin]. The protein operates within isoprenoid biosynthesis; isopentenyl diphosphate biosynthesis via DXP pathway; isopentenyl diphosphate from 1-deoxy-D-xylulose 5-phosphate: step 5/6. Functionally, converts 2C-methyl-D-erythritol 2,4-cyclodiphosphate (ME-2,4cPP) into 1-hydroxy-2-methyl-2-(E)-butenyl 4-diphosphate. The polypeptide is 4-hydroxy-3-methylbut-2-en-1-yl diphosphate synthase (flavodoxin) (Streptomyces griseus subsp. griseus (strain JCM 4626 / CBS 651.72 / NBRC 13350 / KCC S-0626 / ISP 5235)).